Here is a 444-residue protein sequence, read N- to C-terminus: UDP-N-acetylmuramoylalanine--D-glutamate ligase (444 aa).

Residue 118–124 (GTNGKTT) coordinates ATP.

The protein belongs to the MurCDEF family.

It is found in the cytoplasm. The enzyme catalyses UDP-N-acetyl-alpha-D-muramoyl-L-alanine + D-glutamate + ATP = UDP-N-acetyl-alpha-D-muramoyl-L-alanyl-D-glutamate + ADP + phosphate + H(+). It functions in the pathway cell wall biogenesis; peptidoglycan biosynthesis. Functionally, cell wall formation. Catalyzes the addition of glutamate to the nucleotide precursor UDP-N-acetylmuramoyl-L-alanine (UMA). The sequence is that of UDP-N-acetylmuramoylalanine--D-glutamate ligase from Protochlamydia amoebophila (strain UWE25).